Reading from the N-terminus, the 130-residue chain is Small ribosomal subunit protein uS9 (130 aa).

Belongs to the universal ribosomal protein uS9 family.

This chain is Small ribosomal subunit protein uS9, found in Desulfosudis oleivorans (strain DSM 6200 / JCM 39069 / Hxd3) (Desulfococcus oleovorans).